A 355-amino-acid chain; its full sequence is Class E basic helix-loop-helix protein 22 (355 aa).

2 disordered regions span residues A34–G90 and G128–K215. 2 stretches are compositionally biased toward gly residues: residues G81–G90 and G185–S207. Positions A216–Q270 constitute a bHLH domain.

In terms of assembly, interacts with PRDM8. In terms of tissue distribution, brain-specific, with the highest expression in the cerebellum.

It localises to the nucleus. Functionally, inhibits DNA binding of TCF3/E47 homodimers and TCF3 (E47)/NEUROD1 heterodimers and acts as a strong repressor of Neurod1 and Myod-responsive genes, probably by heterodimerization with class a basic helix-loop-helix factors. Despite the presence of an intact basic domain, does not bind to DNA. In the brain, may function as an area-specific transcription factor that regulates the postmitotic acquisition of area identities and elucidate the genetic hierarchy between progenitors and postmitotic neurons driving neocortical arealization. May be required for the survival of a specific population of inhibitory neurons in the superficial laminae of the spinal cord dorsal horn that may regulate pruritis. Seems to play a crucial role in the retinogenesis, in the specification of amacrine and bipolar subtypes. Forms with PRDM8 a transcriptional repressor complex controlling genes involved in neural development and neuronal differentiation. In Mus musculus (Mouse), this protein is Class E basic helix-loop-helix protein 22 (Bhlhe22).